Consider the following 300-residue polypeptide: Cation-efflux pump FieF (300 aa).

Transmembrane regions (helical) follow at residues 12–32 (AALA…VAWY), 40–60 (LAAL…LLVV), 82–102 (AALA…LTGF), and 114–134 (PGVG…LVTY). Zn(2+) contacts are provided by aspartate 45 and aspartate 49. Residues histidine 153 and aspartate 157 each coordinate Zn(2+). 2 consecutive transmembrane segments (helical) span residues 155–175 (QSDV…WYGF) and 178–198 (ADAL…LRMG).

Belongs to the cation diffusion facilitator (CDF) transporter (TC 2.A.4) family. FieF subfamily. Homodimer.

The protein localises to the cell inner membrane. The catalysed reaction is Zn(2+)(in) + H(+)(out) = Zn(2+)(out) + H(+)(in). It catalyses the reaction Cd(2+)(in) + H(+)(out) = Cd(2+)(out) + H(+)(in). It carries out the reaction Fe(2+)(in) + H(+)(out) = Fe(2+)(out) + H(+)(in). In terms of biological role, divalent metal cation transporter which exports Zn(2+), Cd(2+) and possibly Fe(2+). May be involved in zinc and iron detoxification by efflux. This Serratia proteamaculans (strain 568) protein is Cation-efflux pump FieF.